Reading from the N-terminus, the 127-residue chain is Large ribosomal subunit protein bL12 (127 aa).

Belongs to the bacterial ribosomal protein bL12 family. As to quaternary structure, homodimer. Part of the ribosomal stalk of the 50S ribosomal subunit. Forms a multimeric L10(L12)X complex, where L10 forms an elongated spine to which 2 to 4 L12 dimers bind in a sequential fashion. Binds GTP-bound translation factors.

In terms of biological role, forms part of the ribosomal stalk which helps the ribosome interact with GTP-bound translation factors. Is thus essential for accurate translation. This chain is Large ribosomal subunit protein bL12, found in Leptospira interrogans serogroup Icterohaemorrhagiae serovar copenhageni (strain Fiocruz L1-130).